A 263-amino-acid chain; its full sequence is MAGQTTADYIGHHLSFLKTGDGFWNVHLDTLFFSLVAGATFLFFFSRVAKNATDGVPGKFQCFVEMIVEWVDGLVKDNFHGSREVVAPLALTVFCWVFVMNAIDLIPVDYPPQFAALLGIDYLRAVPTADISATLGMAICVFCLIIFYTIKSKGFSGFVKEYTLHPFNHWAFIPVNFVLEIVTLLAKPISLAFRLFGNMYAGELIFILIAVMYMADNFLLQALGLPLHLAWAIFHILVITLQAFIFMMLTIVYLSIAYNKADH.

The next 6 helical transmembrane spans lie at 26-46, 86-106, 130-150, 166-186, 195-215, and 229-249; these read VHLDTLFFSLVAGATFLFFFS, VAPLALTVFCWVFVMNAIDLI, DISATLGMAICVFCLIIFYTI, PFNHWAFIPVNFVLEIVTLLA, LFGNMYAGELIFILIAVMYMA, and LAWAIFHILVITLQAFIFMML.

It belongs to the ATPase A chain family. In terms of assembly, F-type ATPases have 2 components, CF(1) - the catalytic core - and CF(0) - the membrane proton channel. CF(1) has five subunits: alpha(3), beta(3), gamma(1), delta(1), epsilon(1). CF(0) has three main subunits: a(1), b(2) and c(9-12). The alpha and beta chains form an alternating ring which encloses part of the gamma chain. CF(1) is attached to CF(0) by a central stalk formed by the gamma and epsilon chains, while a peripheral stalk is formed by the delta and b chains.

The protein localises to the cell inner membrane. Key component of the proton channel; it plays a direct role in the translocation of protons across the membrane. The chain is ATP synthase subunit a from Glaesserella parasuis serovar 5 (strain SH0165) (Haemophilus parasuis).